We begin with the raw amino-acid sequence, 349 residues long: Glycerol-3-phosphate dehydrogenase [NAD(P)+] (349 aa).

Positions 31, 32, 52, 53, and 126 each coordinate NADPH. 3 residues coordinate sn-glycerol 3-phosphate: Lys-126, Gly-154, and Ser-156. NADPH is bound at residue Ala-158. Sn-glycerol 3-phosphate contacts are provided by Lys-209, Asp-262, Ser-272, Arg-273, and Asn-274. Residue Lys-209 is the Proton acceptor of the active site. Arg-273 serves as a coordination point for NADPH. The NADPH site is built by Val-297 and Glu-299.

This sequence belongs to the NAD-dependent glycerol-3-phosphate dehydrogenase family.

It localises to the cytoplasm. The catalysed reaction is sn-glycerol 3-phosphate + NAD(+) = dihydroxyacetone phosphate + NADH + H(+). It carries out the reaction sn-glycerol 3-phosphate + NADP(+) = dihydroxyacetone phosphate + NADPH + H(+). Its pathway is membrane lipid metabolism; glycerophospholipid metabolism. Its function is as follows. Catalyzes the reduction of the glycolytic intermediate dihydroxyacetone phosphate (DHAP) to sn-glycerol 3-phosphate (G3P), the key precursor for phospholipid synthesis. In Clostridium tetani (strain Massachusetts / E88), this protein is Glycerol-3-phosphate dehydrogenase [NAD(P)+].